The primary structure comprises 538 residues: Acetylcholine receptor subunit alpha-type acr-7 (538 aa).

An N-terminal signal peptide occupies residues 1-27 (MMVQSIQIVLPVALFFLIVFNGFTVEG). Topologically, residues 28–250 (SKKEAQLYRD…LHLRRRTFYY (223 aa)) are extracellular. N-linked (GlcNAc...) asparagine glycans are attached at residues Asn41 and Asn101. 2 disulfide bridges follow: Cys160–Cys174 and Cys229–Cys230. 3 helical membrane-spanning segments follow: residues 251-271 (VFNV…AFCL), 280-300 (IGLQ…LSEM), and 313-333 (VFFS…ILVL). The Cytoplasmic portion of the chain corresponds to 334–513 (NIRYRQITNH…FAAQAVDRFC (180 aa)). The chain crosses the membrane as a helical span at residues 514 to 534 (LIIFTIVFIICCFIFVAIPPI).

This sequence belongs to the ligand-gated ion channel (TC 1.A.9) family. Acetylcholine receptor (TC 1.A.9.1) subfamily. In terms of assembly, forms a homooligomeric channel blocked by alpha-bungarotoxin. The structure is probably pentameric.

The protein localises to the postsynaptic cell membrane. Its subcellular location is the cell membrane. Its function is as follows. After binding acetylcholine, the AChR responds by an extensive change in conformation that affects all subunits and leads to opening of an ion-conducting channel across the plasma membrane. This chain is Acetylcholine receptor subunit alpha-type acr-7 (acr-7), found in Caenorhabditis elegans.